A 246-amino-acid chain; its full sequence is 5'-nucleotidase SurE (246 aa).

Asp8, Asp9, Ser39, and Asn91 together coordinate a divalent metal cation.

Belongs to the SurE nucleotidase family. The cofactor is a divalent metal cation.

It is found in the cytoplasm. It carries out the reaction a ribonucleoside 5'-phosphate + H2O = a ribonucleoside + phosphate. Nucleotidase that shows phosphatase activity on nucleoside 5'-monophosphates. The polypeptide is 5'-nucleotidase SurE (Mannheimia succiniciproducens (strain KCTC 0769BP / MBEL55E)).